The sequence spans 334 residues: Protein-methionine-sulfoxide reductase catalytic subunit MsrP (334 aa).

Residues 1 to 44 constitute a signal peptide (tat-type signal); the sequence is MKKNQFLKESDVTAESVFFMTRRQVLKALGISAAALSLPHAAHA. Mo-molybdopterin contacts are provided by residues Asn88, 91-92, Cys146, Thr181, Asn233, Arg238, and 249-251; these read YE and GIK.

This sequence belongs to the MsrP family. In terms of assembly, heterodimer of a catalytic subunit (MsrP) and a heme-binding subunit (MsrQ). Mo-molybdopterin is required as a cofactor. Predicted to be exported by the Tat system. The position of the signal peptide cleavage has not been experimentally proven.

The protein localises to the periplasm. It carries out the reaction L-methionyl-[protein] + a quinone + H2O = L-methionyl-(S)-S-oxide-[protein] + a quinol. It catalyses the reaction L-methionyl-[protein] + a quinone + H2O = L-methionyl-(R)-S-oxide-[protein] + a quinol. Its function is as follows. Part of the MsrPQ system that repairs oxidized periplasmic proteins containing methionine sulfoxide residues (Met-O), using respiratory chain electrons. Thus protects these proteins from oxidative-stress damage caused by reactive species of oxygen and chlorine generated by the host defense mechanisms. MsrPQ is essential for the maintenance of envelope integrity under bleach stress, rescuing a wide series of structurally unrelated periplasmic proteins from methionine oxidation, including the primary periplasmic chaperone SurA and the lipoprotein Pal. The catalytic subunit MsrP is non-stereospecific, being able to reduce both (R-) and (S-) diastereoisomers of methionine sulfoxide. The protein is Protein-methionine-sulfoxide reductase catalytic subunit MsrP of Escherichia coli (strain 55989 / EAEC).